We begin with the raw amino-acid sequence, 137 residues long: Gonadotropin subunit beta-2 (137 aa).

Residues 1-24 form the signal peptide; that stretch reads MLPFMLSSFLGASPSIWPLAPAEA. 6 cysteine pairs are disulfide-bonded: cysteine 30–cysteine 76, cysteine 44–cysteine 91, cysteine 47–cysteine 129, cysteine 55–cysteine 107, cysteine 59–cysteine 109, and cysteine 112–cysteine 119. N-linked (GlcNAc...) asparagine glycosylation is present at asparagine 34.

Belongs to the glycoprotein hormones subunit beta family. In terms of assembly, heterodimer of an alpha and a beta chain.

The protein resides in the secreted. Its function is as follows. Involved in gametogenesis and steroidogenesis. The polypeptide is Gonadotropin subunit beta-2 (cgbb) (Acanthopagrus latus (Yellowfin seabream)).